Reading from the N-terminus, the 308-residue chain is Ribosomal RNA small subunit methyltransferase H (308 aa).

S-adenosyl-L-methionine contacts are provided by residues 36–38 (GGH), aspartate 55, phenylalanine 86, aspartate 103, and glutamine 110.

The protein belongs to the methyltransferase superfamily. RsmH family.

The protein localises to the cytoplasm. The catalysed reaction is cytidine(1402) in 16S rRNA + S-adenosyl-L-methionine = N(4)-methylcytidine(1402) in 16S rRNA + S-adenosyl-L-homocysteine + H(+). In terms of biological role, specifically methylates the N4 position of cytidine in position 1402 (C1402) of 16S rRNA. This chain is Ribosomal RNA small subunit methyltransferase H, found in Helicobacter pylori (strain P12).